The following is a 373-amino-acid chain: Dimethylallyltryptophan synthase CymD (373 aa).

L-tryptophan contacts are provided by aspartate 55, valine 56, and glutamate 64. Glutamate 64 (nucleophile) is an active-site residue. Positions 77, 146, 148, 205, and 207 each coordinate dimethylallyl diphosphate. Position 211 (arginine 211) interacts with L-tryptophan. Tyrosine 274 lines the dimethylallyl diphosphate pocket. Tyrosine 326 is a binding site for L-tryptophan. Dimethylallyl diphosphate is bound by residues arginine 337, lysine 339, and tyrosine 341. The FtsK domain occupies 346 to 373; sequence MHDVTPPPLGVSQQHHLSGQTTARGRTE.

Functionally, dimethylallyltryptophan synthase; part of the gene cluster that mediates the biosynthesis of cyclic heptapeptides, known as cyclomarins and also of cyclic dipeptides, called cyclomarazines, which have both antimicrobial and cytotoxic effects. Catalyzes the reverse N-prenylation of monomeric L-tryptophan with dimethylallyl diphosphate (DMAPP) to form N-(1,1-dimethylallyl)-tryptophan (r-N-DMAT). The formation of r-N-DMAT appears to proceed via the deprotonation of the indole nitrogen of tryptophan, which facilitates a nucleophilic attack on the carbocation that is forming on the dimethylallyl group as the diphosphate dissociates. The N-(1,1-dimethylallyl)-tryptophan produced by CymD is combined with a range of standard and nonproteinogenic amino acid substrates to synthesize the peptides, a process that is probably catalyzed by the non-canonical nonribosomal peptide synthetase (NRPS), CymA. Other proteins in the cluster catalyze further modifications of the peptides including CymV which catalyzes the oxidation of olefinic cyclomarins and cyclomarazines to their respective epoxide derivatives. Utilizes only DMAPP as the prenyl donor and has no requirement for divalent cations. This chain is Dimethylallyltryptophan synthase CymD, found in Salinispora arenicola (strain CNS-205).